The chain runs to 155 residues: DNA gyrase inhibitor (155 aa).

This sequence belongs to the DNA gyrase inhibitor family. Interacts with DNA gyrase.

It is found in the cytoplasm. In terms of biological role, inhibits the supercoiling activity of DNA gyrase. Acts by inhibiting DNA gyrase at an early step, prior to (or at the step of) binding of DNA by the gyrase. It protects cells against toxins that target DNA gyrase, by inhibiting activity of these toxins and reducing the formation of lethal double-strand breaks in the cell. The protein is DNA gyrase inhibitor of Edwardsiella piscicida.